The chain runs to 531 residues: Non-muscle caldesmon (531 aa).

A myosin and calmodulin-binding region spans residues 20–200 (AYQRNDDDEE…LKGGNLGENQ (181 aa)). The segment at 21–379 (YQRNDDDEEE…KKPFKCFTPK (359 aa)) is disordered. Residues 41–50 (QERLRQKQEE) show a composition bias toward basic and acidic residues. A compositionally biased stretch (polar residues) spans 54 to 68 (GQVTDQVEAHVQNSA). Residues 93–116 (RLARREERRQKRLQEALERQKEFD) are compositionally biased toward basic and acidic residues. Positions 120–133 (TDGSLSVPSRRMQN) are enriched in polar residues. A Phosphoserine modification is found at S123. Residues 143–156 (GEEKGESRSGRYEM) show a composition bias toward basic and acidic residues. Positions 162–172 (VITSYQKNSYQ) are enriched in polar residues. Over residues 200–227 (QIKDEKIKKDKEPKEEVKNFLDRKKGFT) the composition is skewed to basic and acidic residues. S249 carries the post-translational modification Phosphoserine; by CDK1. 2 stretches are compositionally biased toward basic and acidic residues: residues 271 to 297 (AGKRLEELRRRRGETESEEFEKLKQKQ) and 305 to 372 (EELK…DKKP). The segment at 303 to 360 (ELEELKKKREERRKVLEEEEQRRKQEEADRKAREEEEKRRLKEEIERRRAEAAEKRQK) is tropomyosin-binding. S382 is modified (phosphoserine). K384 participates in a covalent cross-link: Glycyl lysine isopeptide (Lys-Gly) (interchain with G-Cter in SUMO2). The segment at 392-424 (LNKSVQKSGVKSTHQAAVVSKIDSRLEQYTNAI) is strong actin-binding. S395 is modified (phosphoserine). A tropomyosin-binding region spans residues 402–412 (KSTHQAAVVSK). The segment at 454-460 (WEKGSVF) is calmodulin-binding. Positions 458 to 531 (SVFSSPSASG…VDKVTSPTKV (74 aa)) are disordered. Over residues 459–471 (VFSSPSASGTPNK) the composition is skewed to polar residues. Position 462 is a phosphoserine; by CDK1 (S462). Phosphothreonine; by CDK1 is present on T468. Residues S491 and S497 each carry the phosphoserine; by CDK1 modification. Residues 503-522 (SDLRPGDVSGKRNLWEKQSV) are compositionally biased toward basic and acidic residues. The tract at residues 506–531 (RPGDVSGKRNLWEKQSVDKVTSPTKV) is weak actin-binding. A Phosphoserine; by CDK1 modification is found at S527.

Belongs to the caldesmon family. In terms of processing, in non-muscle cells, phosphorylation by CDK1 during mitosis causes caldesmon to dissociate from microfilaments. Phosphorylation reduces caldesmon binding to actin, myosin, and calmodulin as well as its inhibition of actomyosin ATPase activity. Phosphorylation also occurs in both quiescent and dividing smooth muscle cells with similar effects on the interaction with actin and calmodulin and on microfilaments reorganization. CDK1-mediated phosphorylation promotes Schwann cell migration during peripheral nerve regeneration. In terms of tissue distribution, high-molecular-weight caldesmon (h-caldesmon) is predominantly expressed in smooth muscles, whereas low-molecular-weight caldesmon (l-caldesmon) is widely distributed in non-muscle tissues and cells. Not expressed in skeletal muscle or heart.

It is found in the cytoplasm. The protein localises to the cytoskeleton. Its subcellular location is the myofibril. The protein resides in the stress fiber. Actin- and myosin-binding protein implicated in the regulation of actomyosin interactions in smooth muscle and nonmuscle cells (could act as a bridge between myosin and actin filaments). Stimulates actin binding of tropomyosin which increases the stabilization of actin filament structure. In muscle tissues, inhibits the actomyosin ATPase by binding to F-actin. This inhibition is attenuated by calcium-calmodulin and is potentiated by tropomyosin. Interacts with actin, myosin, two molecules of tropomyosin and with calmodulin. Also plays an essential role during cellular mitosis and receptor capping. Involved in Schwann cell migration during peripheral nerve regeneration. This chain is Non-muscle caldesmon (Cald1), found in Rattus norvegicus (Rat).